We begin with the raw amino-acid sequence, 42 residues long: Kappa-actitoxin-Ael2a (42 aa).

Disulfide bonds link C4-C37, C6-C30, and C20-C38.

The protein belongs to the sea anemone type 3 (BDS) potassium channel toxin family.

It localises to the secreted. The protein resides in the nematocyst. Functionally, peptide with both antimicrobial and neurotoxin activities. This toxin acts both on ERG potassium channels and sodium channels. It potently and reversibly inhibits human Kv11.1/KCNH2/ERG1 (IC(50)=34 nM), rat Kv11.1/KCNH2/ERG1 and Kv11.3/KCNH7/ERG3 voltage-gated potassium channels in a similar potency. It acts as a gating-modifier toxin that shifts the voltage-dependence of ERG activation in the positive direction and suppresses its current amplitudes elicited by strong depolarizing pulses. On sodium channels, it blocks Nav1.2/SCN2A (EC(50)=31 nM), Nav1.3/SCN3A, Nav1.4/SCN4A, Nav1.5/SCN5A, Nav1.6/SCN8A, Nav1.8/SCN10A (EC(50)=92 nM). It may act by binding at site 1 or close by, only when the pore is in an open configuration. Shows antibacterial activity against the Gram-negative bacterium S.typhimurium, but not on the bacteria B.subtilis, S.aureus, and P.aeruginosa. In vivo, this toxin does not induce neurotoxic symptoms when injected into mice. This chain is Kappa-actitoxin-Ael2a, found in Anthopleura elegantissima (Green aggregating anemone).